A 540-amino-acid polypeptide reads, in one-letter code: Chaperonin GroEL (540 aa).

Residues 30 to 33 (TLGP), Lys-51, 87 to 91 (DGTTT), Gly-415, 479 to 481 (NAA), and Asp-495 contribute to the ATP site.

Belongs to the chaperonin (HSP60) family. Forms a cylinder of 14 subunits composed of two heptameric rings stacked back-to-back. Interacts with the co-chaperonin GroES.

The protein localises to the cytoplasm. The catalysed reaction is ATP + H2O + a folded polypeptide = ADP + phosphate + an unfolded polypeptide.. In terms of biological role, together with its co-chaperonin GroES, plays an essential role in assisting protein folding. The GroEL-GroES system forms a nano-cage that allows encapsulation of the non-native substrate proteins and provides a physical environment optimized to promote and accelerate protein folding. The polypeptide is Chaperonin GroEL (Pluralibacter gergoviae (Enterobacter gergoviae)).